The primary structure comprises 123 residues: MNTMITFLVLFVLTAANGAPEANERKIPEAIHNEDQSLAEMAEELMFFLQQTEFEAPLLQEEEEAEXAEXRNSRERRCAMGDVPCTKGKTNCCKGYECKPKSPAWWYDTDFCQSIHSGRPIGI.

The first 18 residues, 1 to 18 (MNTMITFLVLFVLTAANG), serve as a signal peptide directing secretion. Positions 19–77 (APEANERKIPEAIHNEDQSLAEMAEELMFFLQQTEFEAPLLQEEEEAEXAEXRNSRERR) are excised as a propeptide. 3 disulfides stabilise this stretch: C78-C93, C85-C98, and C92-C112.

It belongs to the neurotoxin 14 (magi-1) family. 05 (ICK-7) subfamily. ICK-7 sub-subfamily. As to expression, expressed by the venom gland.

The protein localises to the secreted. In terms of biological role, ion channel inhibitor. The polypeptide is U9-barytoxin-Tl1a (Trittame loki (Brush-footed trapdoor spider)).